A 218-amino-acid polypeptide reads, in one-letter code: DNA-binding protein HU 2 (218 aa).

A bacterial histone-like domain region spans residues 1 to 91 (MNKAQLVEAI…QGFKDLVSGS (91 aa)). The interval 101-218 (VKKAPKGSLS…TAKKATARKK (118 aa)) is disordered. The segment at 118–218 (KAAGKKAAAK…TAKKATARKK (101 aa)) is degenerate repeats region. The segment covering 127–161 (KKATGAAKKTTGAAKKTSAAAKKTTAKKTTGAAKT) has biased composition (low complexity). Positions 162-172 (TAKKTTAKKSA) are enriched in basic residues. Residues 173–182 (AKTTTAAAKK) show a composition bias toward low complexity. The segment covering 183-218 (TAAKKAPAKKATAKKAPAKKSTARKTTAKKATARKK) has biased composition (basic residues).

This sequence belongs to the bacterial histone-like protein family. Long actinobacterial subfamily. As to quaternary structure, homodimer.

It localises to the cytoplasm. The protein localises to the nucleoid. Histone-like DNA-binding protein which is capable of wrapping DNA to stabilize it, and thus to prevent its denaturation under extreme environmental conditions. This Streptomyces coelicolor (strain ATCC BAA-471 / A3(2) / M145) protein is DNA-binding protein HU 2 (hup2).